The following is a 393-amino-acid chain: 5-azacytidine-induced protein 2 (393 aa).

The interval 1–198 (MDALVEDDIC…IELQKAKQTD (198 aa)) is homodimerization. Residues 40-198 (ALVTAYEDIK…IELQKAKQTD (159 aa)) adopt a coiled-coil conformation. The interaction with TBK1 and IKBKE stretch occupies residues 217–258 (SDNMQSAYWELKREMSNLHLVTQVQAELLRKLKTPAAIKKAC). At Ser-319 the chain carries Phosphoserine. Disordered regions lie at residues 321 to 340 (TDHE…HNSY) and 345 to 393 (LEDN…HYKH). Ser-354 carries the phosphoserine modification. Positions 384–393 (QHNQNCHYKH) are enriched in polar residues.

As to quaternary structure, homodimer. Interacts with IKBKE, TBK1 and TICAM1. Interacts with TAX1BP1. Interacts with CALCOCO2. Post-translationally, ubiquitinated via 'Lys-48'-linked polyubiquitination by TRIM38, leading to its degradation.

The protein resides in the cytoplasm. Functionally, adapter protein which binds TBK1 and IKBKE playing a role in antiviral innate immunity. Activates serine/threonine-protein kinase TBK1 and facilitates its oligomerization. Enhances the phosphorylation of NF-kappa-B p65 subunit RELA by TBK1. Promotes TBK1-induced as well as TNF-alpha or PMA-induced activation of NF-kappa-B. Participates in IFNB promoter activation via TICAM1. The protein is 5-azacytidine-induced protein 2 (AZI2) of Bos taurus (Bovine).